We begin with the raw amino-acid sequence, 382 residues long: Prostaglandin D2 receptor 2 (382 aa).

Residues 1 to 32 (MANVTLKPLCPLLEEMVQLPNHSNSSLRYIDH) lie on the Extracellular side of the membrane. Residues asparagine 3, asparagine 21, and asparagine 24 are each glycosylated (N-linked (GlcNAc...) asparagine). The chain crosses the membrane as a helical span at residues 33–55 (VSVLLHGLASLLGLVENGLILFV). At 56-66 (VGCRMRQTVVT) the chain is on the cytoplasmic side. The chain crosses the membrane as a helical span at residues 67–88 (TWVLHLALSDLLAAASLPFFTY). Topologically, residues 89–105 (FLAVGHSWELGTTFCKL) are extracellular. A disulfide bond links cysteine 103 and cysteine 181. A helical transmembrane segment spans residues 106 to 126 (HSSVFFLNMFASGFLLSAISL). Over 127–145 (DRCLQVVRPVWAQNHRTVA) the chain is Cytoplasmic. A helical membrane pass occupies residues 146–167 (VAHRVCLMLWALAVLNTIPYFV). At 168 to 209 (FRDTIPRLDGRIMCYYNLLLWNPGPDRDTTCDYRQKALAVSK) the chain is on the extracellular side. A helical transmembrane segment spans residues 210–230 (FLLAFMVPLAIIASSHVAVSL). The Cytoplasmic portion of the chain corresponds to 231–246 (RLHHRGRQRTGRFVRL). The chain crosses the membrane as a helical span at residues 247–268 (VAAIVVAFVLCWGPYHIFSLLE). At 269–287 (ARAHSVTTLRQLASRGLPF) the chain is on the extracellular side. The chain crosses the membrane as a helical span at residues 288–307 (VTSLAFFNSVVNPLLYVFTC). The Cytoplasmic segment spans residues 308–357 (PDMLYKLRRSLRAVLESVLVEDSDQSGGLRNRRRRASSTATPASTLLLAD). The Involved in the recycling of CRTH2 motif lies at 329–332 (DSDQ). Serine 330 and serine 344 each carry phosphoserine.

This sequence belongs to the G-protein coupled receptor 1 family. Post-translationally, phosphorylated.

It is found in the cell membrane. In terms of biological role, receptor for prostaglandin D2 (PGD2). Coupled to the G(i)-protein. Receptor activation may result in pertussis toxin-sensitive decreases in cAMP levels and Ca(2+) mobilization. PI3K signaling is also implicated in mediating PTGDR2 effects. PGD2 induced receptor internalization. CRTH2 internalization can be regulated by diverse kinases such as, PKC, PKA, GRK2, GPRK5/GRK5 and GRK6. Receptor activation is responsible, at least in part, in immune regulation and allergic/inflammation responses. This Mus musculus (Mouse) protein is Prostaglandin D2 receptor 2 (Ptgdr2).